A 201-amino-acid polypeptide reads, in one-letter code: Potassium-transporting ATPase KdpC subunit (201 aa).

The helical transmembrane segment at 9 to 29 (ILVMLALTLITGLLYPLAMTV) threads the bilayer. 2 stretches are compositionally biased toward polar residues: residues 73–84 (TTAADPNDSTKT) and 91–101 (AANSSGSNLGP). The segment at 73–103 (TTAADPNDSTKTVPAPYNAANSSGSNLGPTS) is disordered.

It belongs to the KdpC family. As to quaternary structure, the system is composed of three essential subunits: KdpA, KdpB and KdpC.

It localises to the cell inner membrane. Its function is as follows. Part of the high-affinity ATP-driven potassium transport (or Kdp) system, which catalyzes the hydrolysis of ATP coupled with the electrogenic transport of potassium into the cytoplasm. This subunit acts as a catalytic chaperone that increases the ATP-binding affinity of the ATP-hydrolyzing subunit KdpB by the formation of a transient KdpB/KdpC/ATP ternary complex. The chain is Potassium-transporting ATPase KdpC subunit from Bradyrhizobium sp. (strain BTAi1 / ATCC BAA-1182).